The primary structure comprises 535 residues: Glutamyl-tRNA reductase 3, chloroplastic (535 aa).

The active-site Nucleophile is the C131. Residues 131-133 (CNR), S190, 195-197 (EGQ), and Q201 contribute to the substrate site. 272 to 277 (GAGKMG) contacts NADP(+).

It belongs to the glutamyl-tRNA reductase family. Primarily expressed in roots.

The protein resides in the plastid. It localises to the chloroplast. The enzyme catalyses (S)-4-amino-5-oxopentanoate + tRNA(Glu) + NADP(+) = L-glutamyl-tRNA(Glu) + NADPH + H(+). Its pathway is porphyrin-containing compound metabolism; protoporphyrin-IX biosynthesis; 5-aminolevulinate from L-glutamyl-tRNA(Glu): step 1/2. In terms of biological role, catalyzes the NADPH-dependent reduction of glutamyl-tRNA(Glu) to glutamate 1-semialdehyde (GSA). This chain is Glutamyl-tRNA reductase 3, chloroplastic (HEMA3), found in Hordeum vulgare (Barley).